The sequence spans 61 residues: Large ribosomal subunit protein uL30 (61 aa).

The protein belongs to the universal ribosomal protein uL30 family. Part of the 50S ribosomal subunit.

The sequence is that of Large ribosomal subunit protein uL30 from Corynebacterium jeikeium (strain K411).